Reading from the N-terminus, the 149-residue chain is Antitoxin HigA1 (149 aa).

The 55-residue stretch at 42 to 96 (LIALRKHCQLSQVEVAKRMGVRQPTVSGFEKEPSDPKLSTLQRYARALDARLRLV) folds into the HTH cro/C1-type domain. The H-T-H motif DNA-binding region spans 53 to 72 (QVEVAKRMGVRQPTVSGFEK).

As to quaternary structure, interacts with SecB-like chaperone MT2006.

Functionally, antitoxin component of an atypical, type II toxin-antitoxin chaperone (TAC) system. Probably neutralizes the toxic effects of cognate toxin HigB1, which also requires SecB-like chaperone MT2006 (AC Q7D7P7). Autorepresses its operon (higB1-higA1-MT2006). The sequence is that of Antitoxin HigA1 from Mycobacterium tuberculosis (strain CDC 1551 / Oshkosh).